Reading from the N-terminus, the 271-residue chain is Meiotic drive suppressor wtf35 (271 aa).

Disordered regions lie at residues 1 to 24 and 54 to 75; these read MKNN…DHEI and TVPE…ERRQ. Over residues 57–69 the composition is skewed to polar residues; sequence EDSSTGPTETANP. 4 helical membrane-spanning segments follow: residues 90–110, 120–140, 176–196, and 213–233; these read LLIS…CVNP, AFSV…FCFF, WENM…VGSP, and SLAE…AETV.

It belongs to the WTF family. Homomer. Interacts with other proteins that exhibit high sequence similarity.

It localises to the spore membrane. Its subcellular location is the vacuole membrane. Its function is as follows. Acts as a suppressor component of the dual wtf meiotic drive system, and can suppress but not confer meiotic drive by compatible poisons. Wtf meiotic drive systems promote unequal transmission of alleles from the parental zygote to progeny spores by encoding a poison and an antidote from the same locus; the poison is trans-acting and forms toxic aggregates in all spores within an ascus, wherease the antidote is spore-specific and targets aggregates for degradation by the vacuole. Meiotic drive by wtf systems therefore lead to poisoning of all progeny that do not inherit the dual poison/antidote allele, or express a compatible antidote. The chain is Meiotic drive suppressor wtf35 from Schizosaccharomyces kambucha (Fission yeast).